A 2290-amino-acid polypeptide reads, in one-letter code: Protein Ycf2 (2290 aa).

1644–1651 (GSIGTGRS) contacts ATP.

This sequence belongs to the Ycf2 family.

The protein localises to the plastid. It is found in the chloroplast stroma. In terms of biological role, probable ATPase of unknown function. Its presence in a non-photosynthetic plant (Epifagus virginiana) and experiments in tobacco indicate that it has an essential function which is probably not related to photosynthesis. The protein is Protein Ycf2 of Nasturtium officinale (Watercress).